Reading from the N-terminus, the 209-residue chain is COP9 signalosome complex subunit 8 (209 aa).

The PCI domain maps to 8–179; sequence DNAFSFRKLL…GTLDVSLNRF (172 aa). Ser-175 is subject to Phosphoserine.

This sequence belongs to the CSN8 family. Component of the CSN complex, composed of COPS1/GPS1, COPS2, COPS3, COPS4, COPS5, COPS6, COPS7 (COPS7A or COPS7B), COPS8 and COPS9. In the complex, it probably interacts directly with COPS3, COPS4 and COPS7 (COPS7A or COPS7B). In terms of tissue distribution, widely expressed.

It localises to the cytoplasm. It is found in the nucleus. Its function is as follows. Component of the COP9 signalosome complex (CSN), a complex involved in various cellular and developmental processes. The CSN complex is an essential regulator of the ubiquitin (Ubl) conjugation pathway by mediating the deneddylation of the cullin subunits of SCF-type E3 ligase complexes, leading to decrease the Ubl ligase activity of SCF-type complexes such as SCF, CSA or DDB2. The complex is also involved in phosphorylation of p53/TP53, c-jun/JUN, IkappaBalpha/NFKBIA, ITPK1 and IRF8/ICSBP, possibly via its association with CK2 and PKD kinases. CSN-dependent phosphorylation of TP53 and JUN promotes and protects degradation by the Ubl system, respectively. The protein is COP9 signalosome complex subunit 8 (Cops8) of Mus musculus (Mouse).